Reading from the N-terminus, the 87-residue chain is UPF0235 protein TGRD_618 (87 aa).

Belongs to the UPF0235 family.

This is UPF0235 protein TGRD_618 from Endomicrobium trichonymphae.